Reading from the N-terminus, the 299-residue chain is Sulfotransferase 1B1 (299 aa).

48–53 (KSGTTW) contributes to the 3'-phosphoadenylyl sulfate binding site. 107-109 (KTH) is a substrate binding site. Histidine 109 serves as the catalytic Proton acceptor. 3'-phosphoadenylyl sulfate-binding positions include arginine 131, serine 139, tyrosine 194, 228-233 (TSFEMM), and 258-260 (RKG).

Belongs to the sulfotransferase 1 family. Liver specific.

The protein localises to the cytoplasm. The enzyme catalyses a phenol + 3'-phosphoadenylyl sulfate = an aryl sulfate + adenosine 3',5'-bisphosphate + H(+). It carries out the reaction 3,3',5-triiodo-L-thyronine + 3'-phosphoadenylyl sulfate = 3,3',5-triiodo-L-thyronine sulfate + adenosine 3',5'-bisphosphate + H(+). It catalyses the reaction 3,3',5'-triiodo-L-thyronine + 3'-phosphoadenylyl sulfate = 3,3',5'-triiodo-L-thyronine sulfate + adenosine 3',5'-bisphosphate + H(+). The catalysed reaction is 3,3'-diiodo-L-thyronine + 3'-phosphoadenylyl sulfate = 3,3'-diiodo-L-thyronine sulfate + adenosine 3',5'-bisphosphate + H(+). The enzyme catalyses dopamine + 3'-phosphoadenylyl sulfate = dopamine 3-O-sulfate + adenosine 3',5'-bisphosphate + H(+). It carries out the reaction dopamine + 3'-phosphoadenylyl sulfate = dopamine 4-O-sulfate + adenosine 3',5'-bisphosphate + H(+). It catalyses the reaction 4-ethylphenol + 3'-phosphoadenylyl sulfate = 4-ethylphenyl sulfate + adenosine 3',5'-bisphosphate + H(+). Its function is as follows. Sulfotransferase that utilizes 3'-phospho-5'-adenylyl sulfate (PAPS) as sulfonate donor to catalyze the sulfate conjugation of dopamine, small phenols such as 1-naphthol and p-nitrophenol and thyroid hormones, including 3,3'-diiodothyronine, triidothyronine (T3) and reverse triiodothyronine (rT3). May play a role in gut microbiota-host metabolic interaction. O-sulfonates 4-ethylphenol (4-EP), a dietary tyrosine-derived metabolite produced by gut bacteria. The product 4-EPS crosses the blood-brain barrier and may negatively regulate oligodendrocyte maturation and myelination, affecting the functional connectivity of different brain regions associated with the limbic system. This Mus musculus (Mouse) protein is Sulfotransferase 1B1.